Consider the following 967-residue polypeptide: Isoleucine--tRNA ligase 2 (967 aa).

Residues 58-68 (PYANGDIHIGH) carry the 'HIGH' region motif. Residues 437–446 (AVTEEAGATG) show a composition bias toward low complexity. The interval 437-466 (AVTEEAGATGEARKVGKAEEAEEAGPAKTL) is disordered. L-isoleucyl-5'-AMP is bound at residue Glu-598. The short motif at 639 to 643 (KMSKS) is the 'KMSKS' region element. Lys-642 lines the ATP pocket. Residues Cys-922, Cys-925, Cys-942, and Cys-945 each contribute to the Zn(2+) site.

Belongs to the class-I aminoacyl-tRNA synthetase family. IleS type 1 subfamily. Monomer. The cofactor is Zn(2+).

The protein localises to the cytoplasm. The catalysed reaction is tRNA(Ile) + L-isoleucine + ATP = L-isoleucyl-tRNA(Ile) + AMP + diphosphate. Its function is as follows. Catalyzes the attachment of isoleucine to tRNA(Ile). As IleRS can inadvertently accommodate and process structurally similar amino acids such as valine, to avoid such errors it has two additional distinct tRNA(Ile)-dependent editing activities. One activity is designated as 'pretransfer' editing and involves the hydrolysis of activated Val-AMP. The other activity is designated 'posttransfer' editing and involves deacylation of mischarged Val-tRNA(Ile). In Burkholderia mallei (strain ATCC 23344), this protein is Isoleucine--tRNA ligase 2.